The chain runs to 975 residues: E3 ubiquitin-protein ligase BRE1A (975 aa).

The interval 1 to 37 (MSGIGSKRAAGEPGTSVPPEKKTAVEDSGTTVETIKL) is disordered. Position 21 is an N6-acetyllysine (lysine 21). Serine 41 carries the phosphoserine modification. Positions 43 to 90 (TEELDIRTLQTKNRKLAEMLDQRQAIEDELREHIEKLERRQATDDASL) form a coiled coil. Positions 125–155 (KALVVPEPEPDSDSNQERKDDRERGEGQEPA) are disordered. Phosphoserine is present on residues serine 136 and serine 138. A compositionally biased stretch (basic and acidic residues) spans 139 to 151 (NQERKDDRERGEG). Coiled coils occupy residues 168–375 (EEME…EEVV) and 429–898 (SLHK…TTKK). Lysine 348 and lysine 510 each carry N6-acetyllysine. The disordered stretch occupies residues 507–622 (DLNKTRLRSG…GKHDDGRKKE (116 aa)). Serine 522 is modified (phosphoserine). Residues 527–540 (EDPKDEPAELKQDS) are compositionally biased toward basic and acidic residues. Over residues 543–552 (LATQSAASKA) the composition is skewed to polar residues. Over residues 558-622 (NEIKSKRDEE…GKHDDGRKKE (65 aa)) the composition is skewed to basic and acidic residues. Position 562 is a phosphoserine (serine 562). An RING-type zinc finger spans residues 922–961 (CPCCNMRKKDAVLTKCFHVFCFECVKTRYDTRQRKCPKCN).

This sequence belongs to the BRE1 family. As to quaternary structure, component of the RNF20/40 complex (also known as BRE1 complex) probably composed of 2 copies of RNF20/BRE1A and 2 copies of RNF40/BRE1B. Interacts with UBE2E1/UBCH6. Interacts with p53/TP53 and WAC. Interacts with PAF1; the interaction mediates the association of the PAF1 and RNF20/40 complexes which is a prerequsite for recruitment of UBE2A/B. Interacts with PA2G4. Interacts with FBXL19.

It localises to the nucleus. The enzyme catalyses S-ubiquitinyl-[E2 ubiquitin-conjugating enzyme]-L-cysteine + [acceptor protein]-L-lysine = [E2 ubiquitin-conjugating enzyme]-L-cysteine + N(6)-ubiquitinyl-[acceptor protein]-L-lysine.. The protein operates within protein modification; protein ubiquitination. Its function is as follows. Component of the RNF20/40 E3 ubiquitin-protein ligase complex that mediates monoubiquitination of 'Lys-120' of histone H2B (H2BK120ub1). H2BK120ub1 gives a specific tag for epigenetic transcriptional activation and is also prerequisite for histone H3 'Lys-4' and 'Lys-79' methylation (H3K4me and H3K79me, respectively). It thereby plays a central role in histone code and gene regulation. The RNF20/40 complex forms a H2B ubiquitin ligase complex in cooperation with the E2 enzyme UBE2A or UBE2B; reports about the cooperation with UBE2E1/UBCH are contradictory. Required for transcriptional activation of Hox genes. Recruited to the MDM2 promoter, probably by being recruited by p53/TP53, and thereby acts as a transcriptional coactivator. Mediates the polyubiquitination of PA2G4 leading to its proteasome-mediated degradation. The polypeptide is E3 ubiquitin-protein ligase BRE1A (RNF20) (Bos taurus (Bovine)).